An 811-amino-acid polypeptide reads, in one-letter code: DEP domain-containing protein 1A (811 aa).

Residues Phe24–Ala108 form the DEP domain. A Rho-GAP domain is found at Asp281–Ile321. A Phosphoserine modification is found at Ser512. The interaction with ZNF224 stretch occupies residues Ala598–Cys653.

In terms of assembly, isoform 2 and isoform 5 can form homodimers and heterodimers. Interacts with ZNF224. Expressed in testis. Up-regulated in bladder cancer cells (at protein level).

It is found in the nucleus. Functionally, may be involved in transcriptional regulation as a transcriptional corepressor. The DEPDC1A-ZNF224 complex may play a critical role in bladder carcinogenesis by repressing the transcription of the A20 gene, leading to transport of NF-KB protein into the nucleus, resulting in suppression of apoptosis of bladder cancer cells. This chain is DEP domain-containing protein 1A (DEPDC1), found in Homo sapiens (Human).